Consider the following 559-residue polypeptide: U-box domain-containing protein 41 (559 aa).

2 disordered regions span residues 1–30 (MGGN…KHDE) and 121–156 (RMDK…SPSD). Positions 12–24 (HQRSSSATTTTLP) are enriched in polar residues. In terms of domain architecture, U-box spans 30–104 (ETPPEFLCPI…FSWCDRQKVD (75 aa)). ARM repeat units lie at residues 266–305 (EDLR…NLSL), 307–346 (KQNK…SLAL), 348–388 (DENK…HLSL), 390–427 (PSNR…NLAA), and 428–472 (CPDG…TLCQ).

It carries out the reaction S-ubiquitinyl-[E2 ubiquitin-conjugating enzyme]-L-cysteine + [acceptor protein]-L-lysine = [E2 ubiquitin-conjugating enzyme]-L-cysteine + N(6)-ubiquitinyl-[acceptor protein]-L-lysine.. It functions in the pathway protein modification; protein ubiquitination. Functionally, functions as an E3 ubiquitin ligase. The sequence is that of U-box domain-containing protein 41 (PUB41) from Arabidopsis thaliana (Mouse-ear cress).